Here is a 296-residue protein sequence, read N- to C-terminus: Cbb3-type cytochrome c oxidase subunit CcoP (296 aa).

Residues 1–31 are Cytoplasmic-facing; it reads MAQNYKDELSGVETTGHEWDGLRELNNPLPK. Residues 32 to 52 form a helical membrane-spanning segment; the sequence is WWLYLFYVCIAWAMVYYVFYP. Over 53–296 the chain is Periplasmic; sequence AWPLGKTYTK…VYVHNLGGGK (244 aa). 2 consecutive Cytochrome c domains span residues 108 to 200 and 207 to 293; these read FAMA…LSLN and GKVA…HNLG. Residues Cys-121, Cys-124, His-125, Met-175, Cys-220, Cys-223, His-224, and Met-270 each contribute to the heme c site.

Belongs to the CcoP / FixP family. Component of the cbb3-type cytochrome c oxidase at least composed of CcoN, CcoO, CcoQ and CcoP. Heme c is required as a cofactor.

It is found in the cell inner membrane. The protein operates within energy metabolism; oxidative phosphorylation. C-type cytochrome. Part of the cbb3-type cytochrome c oxidase complex. CcoP subunit is required for transferring electrons from donor cytochrome c via its heme groups to CcoO subunit. From there, electrons are shuttled to the catalytic binuclear center of CcoN subunit where oxygen reduction takes place. The complex also functions as a proton pump. The chain is Cbb3-type cytochrome c oxidase subunit CcoP from Azospirillum sp. (strain B510).